The primary structure comprises 106 residues: NADH-quinone oxidoreductase subunit K (106 aa).

3 helical membrane-spanning segments follow: residues 9-29, 35-55, and 70-90; these read LGHYLAVAAVLLVLGIFGIFL, IVMLMSIELILLAVNLNMVAF, and FILTVAAAEAAIGLAILVIYF.

This sequence belongs to the complex I subunit 4L family. NDH-1 is composed of 14 different subunits. Subunits NuoA, H, J, K, L, M, N constitute the membrane sector of the complex.

The protein localises to the cell inner membrane. It carries out the reaction a quinone + NADH + 5 H(+)(in) = a quinol + NAD(+) + 4 H(+)(out). Functionally, NDH-1 shuttles electrons from NADH, via FMN and iron-sulfur (Fe-S) centers, to quinones in the respiratory chain. The immediate electron acceptor for the enzyme in this species is believed to be ubiquinone. Couples the redox reaction to proton translocation (for every two electrons transferred, four hydrogen ions are translocated across the cytoplasmic membrane), and thus conserves the redox energy in a proton gradient. The protein is NADH-quinone oxidoreductase subunit K of Granulibacter bethesdensis (strain ATCC BAA-1260 / CGDNIH1).